The chain runs to 425 residues: cAMP/cGMP-dependent 3',5'-cAMP/cGMP phosphodiesterase 7 (425 aa).

The N-terminal stretch at 1 to 17 is a signal peptide; that stretch reads MKYLILILIFFIEINNG.

It belongs to the cyclic nucleotide phosphodiesterase class-II family.

It localises to the secreted. The protein localises to the extracellular space. The protein resides in the cell surface. The enzyme catalyses 3',5'-cyclic AMP + H2O = AMP + H(+). The catalysed reaction is 3',5'-cyclic GMP + H2O = GMP + H(+). Its activity is regulated as follows. Inhibited by dithiotreitol (DTT). In terms of biological role, phosphodiesterase with dual cAMP/cGMP specificity. However, displays a preference for cAMP over cGMP. Seems to regulate cAMP/cGMP concentration especially during cell aggregation. The polypeptide is cAMP/cGMP-dependent 3',5'-cAMP/cGMP phosphodiesterase 7 (pde7) (Dictyostelium discoideum (Social amoeba)).